A 518-amino-acid polypeptide reads, in one-letter code: Sensor protein kinase HptS (518 aa).

2 consecutive transmembrane segments (helical) span residues 20 to 40 (IFPV…IYIW) and 222 to 242 (GITL…FGFI). Residues 297 to 513 (EQLIHSIEHT…LICYKIPLSR (217 aa)) form the Histidine kinase domain. His325 bears the Phosphohistidine; by autocatalysis mark.

Autophosphorylated.

It localises to the cell membrane. It carries out the reaction ATP + protein L-histidine = ADP + protein N-phospho-L-histidine.. In terms of biological role, member of the two-component regulatory system HptS/HptR that regulates genes involved in hexose phosphate transport system in response to changes in extracellular phosphate sources. May act as a sensor protein kinase which is autophosphorylated at a histidine residue and transfers its phosphate group to the conserved aspartic acid residue in the regulatory domain of HptS. In turn, HptS antagonizes CcpA-dependent transcription of a subset of CcpA-regulated genes involved in antibiotic susceptibility. The sequence is that of Sensor protein kinase HptS (hptS) from Staphylococcus aureus (strain USA300).